The primary structure comprises 190 residues: Guanylate kinase (190 aa).

Residues 3–185 enclose the Guanylate kinase-like domain; sequence NYIFIVSAPS…SLEQFCKYFE (183 aa). Residue 10 to 17 coordinates ATP; the sequence is APSGAGKS.

The protein belongs to the guanylate kinase family.

It localises to the cytoplasm. The enzyme catalyses GMP + ATP = GDP + ADP. Essential for recycling GMP and indirectly, cGMP. The chain is Guanylate kinase from Francisella tularensis subsp. tularensis (strain FSC 198).